We begin with the raw amino-acid sequence, 176 residues long: uncharacterized protein (176 aa).

Polar residues predominate over residues 1–12 (MRLPYSSSKPIP). Disordered stretches follow at residues 1–88 (MRLP…PQQQ) and 109–132 (VNNSPIKTPSKKHRSSSKKSPSSS). Positions 13 to 24 (TNNNNNNNNTNN) are enriched in low complexity. A compositionally biased stretch (polar residues) spans 37 to 46 (SYYQTQENNK). Over residues 47–88 (PQQSQQHPLLQHQQQQQQQQQQQQQQQQQQQQQQQQQQPQQQ) the composition is skewed to low complexity.

This is an uncharacterized protein from Dictyostelium discoideum (Social amoeba).